Reading from the N-terminus, the 229-residue chain is Small ribosomal subunit protein uS3 (229 aa).

The region spanning 39–107 (VRQFLIKELK…PAQINISEVR (69 aa)) is the KH type-2 domain.

The protein belongs to the universal ribosomal protein uS3 family. In terms of assembly, part of the 30S ribosomal subunit. Forms a tight complex with proteins S10 and S14.

In terms of biological role, binds the lower part of the 30S subunit head. Binds mRNA in the 70S ribosome, positioning it for translation. In Photobacterium profundum (strain SS9), this protein is Small ribosomal subunit protein uS3.